The chain runs to 1206 residues: Translocase of chloroplast 132, chloroplastic (1206 aa).

The residue at position 2 (G2) is an N-acetylglycine. The stretch at R13–L33 forms a coiled coil. Disordered regions lie at residues L33 to L75 and V97 to S119. The span at V39 to E49 shows a compositional bias: acidic residues. At S195 the chain carries Phosphoserine. Residues Q233–E499 are disordered. Residues A309–V324 are compositionally biased toward polar residues. Residues S325–S336 are compositionally biased toward low complexity. 3 positions are modified to phosphoserine: S337, S363, and S398. The segment covering L357–V379 has biased composition (polar residues). Positions K403 to T427 are enriched in basic and acidic residues. Residues E430–S440 are compositionally biased toward low complexity. Residues A468 to T492 are compositionally biased toward polar residues. An AIG1-type G domain is found at D572–P801. Positions G581–S588 are G1. GTP contacts are provided by residues G584–A589 and D603–G608. Mg(2+) is bound at residue S588. Residues D603–Q606 form a homodimerization region. The G2 stretch occupies residues M607–R611. The G3 stretch occupies residues D628–G631. The interval R666–S671 is homodimerization. The interval T700 to A703 is G4. GTP is bound by residues H701 and E749–N750. The segment at E749–H751 is G5. Positions Q824–L862 are disordered. Over residues Y832–Y853 the composition is skewed to acidic residues. A helical membrane pass occupies residues L1182–Y1199.

The protein belongs to the TRAFAC class TrmE-Era-EngA-EngB-Septin-like GTPase superfamily. AIG1/Toc34/Toc159-like paraseptin GTPase family. TOC159 subfamily. In terms of assembly, homodimer. Part of the TOC core complex that includes 1 protein for the specific recognition of transit peptides surrounded by a ring composed of four proteins forming translocation channels, and four to five GTP-binding proteins providing energy. This core complex can interact with components of the TIC complex to form a larger import complex. Chloroplastic protein precursor such as prSS (precursor of the RuBisCO small subunit) interacts with these complexes. The TOC complex contains a specific subset of polar lipids such as digalactosyldiacylglyceride (DGDG), phosphatidylcholine (PC) and phosphatidylglycerol (PG). Mg(2+) serves as cofactor. Post-translationally, phosphorylated by KOC1. In terms of tissue distribution, expressed in seedlings, leaves, flowers, and roots.

It is found in the plastid. The protein resides in the chloroplast outer membrane. Its subcellular location is the cytoplasm. In terms of biological role, GTPase involved in protein precursor import into chloroplasts. Seems to recognize chloroplast-destined precursor proteins and regulate their presentation to the translocation channel through GTP hydrolysis. Probably specialized in the import of nuclear encoded non-photosynthetic preproteins from the cytoplasm to the chloroplast. The protein is Translocase of chloroplast 132, chloroplastic of Arabidopsis thaliana (Mouse-ear cress).